The sequence spans 207 residues: Protein MK0488 (207 aa).

In terms of domain architecture, AMMECR1 spans 8 to 200 (EEGEFLVRLA…EEEPEGPVRE (193 aa)).

This is Protein MK0488 from Methanopyrus kandleri (strain AV19 / DSM 6324 / JCM 9639 / NBRC 100938).